The sequence spans 160 residues: NSFINPIIQFLARNNLPLLANVYPYFGHIYNTADVPLSYALFTQQEANPAGYQNLFDALLDSMYFAVEKAGGPNVEIIVSESGWPSEGNSAATIENAQTYYRNLIDHVKRGAGTPKKPGKTIETYLFAMFDENDKKGEITEKHFGLFSPDQRAKYQLNFN.

The active-site Nucleophile is the E81.

The protein belongs to the glycosyl hydrolase 17 family. Post-translationally, the N-terminus is blocked.

It is found in the secreted. It localises to the extracellular space. It catalyses the reaction Hydrolysis of (1-&gt;3)-beta-D-glucosidic linkages in (1-&gt;3)-beta-D-glucans.. Its function is as follows. Implicated in the defense of plants against pathogens. The chain is Glucan endo-1,3-beta-glucosidase, acidic isoform PR-O (PR0) from Nicotiana tabacum (Common tobacco).